Consider the following 252-residue polypeptide: 5-oxoprolinase subunit A (252 aa).

Belongs to the LamB/PxpA family. In terms of assembly, forms a complex composed of PxpA, PxpB and PxpC.

The enzyme catalyses 5-oxo-L-proline + ATP + 2 H2O = L-glutamate + ADP + phosphate + H(+). In terms of biological role, catalyzes the cleavage of 5-oxoproline to form L-glutamate coupled to the hydrolysis of ATP to ADP and inorganic phosphate. The sequence is that of 5-oxoprolinase subunit A from Mycolicibacterium paratuberculosis (strain ATCC BAA-968 / K-10) (Mycobacterium paratuberculosis).